The chain runs to 316 residues: MTETFQHISVLLNESIDGLAIKPDGIYIDGTFGRGGHSRTILSKLGPNGRLYSIDRDPQAIAEAGKIDDPRFTIIHGPFSGMAQYAEEYDLVGKVDGVLLDLGVSSPQLDDAERGFSFMKDGPLDMRMDPTSGIPVSQWLMEADLDDITWVIREFGEDKHARRIARAIVEYRENEENEPMVRTGQLAKLISEAAPKSFKEKKHPATRAFQAFRIYINSELEEIDTALKGAARILAPEGRLSVISFHSLEDRMVKRFIRKESKGPEVPHGIPLTEAQIKELGSANMKTVGKAIKPSKQEIDMNPRSRSSVLRIAEKL.

Residues 35 to 37, D55, F79, D101, and Q108 each bind S-adenosyl-L-methionine; that span reads GGH.

This sequence belongs to the methyltransferase superfamily. RsmH family.

It localises to the cytoplasm. It catalyses the reaction cytidine(1402) in 16S rRNA + S-adenosyl-L-methionine = N(4)-methylcytidine(1402) in 16S rRNA + S-adenosyl-L-homocysteine + H(+). Functionally, specifically methylates the N4 position of cytidine in position 1402 (C1402) of 16S rRNA. In Vibrio parahaemolyticus serotype O3:K6 (strain RIMD 2210633), this protein is Ribosomal RNA small subunit methyltransferase H.